A 336-amino-acid polypeptide reads, in one-letter code: Corrinoid adenosyltransferase PduO (336 aa).

Residues 1–185 (MAIYTRTGDA…IIREVSKRYL (185 aa)) form a pduON region. The pduOC stretch occupies residues 194-336 (KETTPVALSF…IAAINVGTHQ (143 aa)). A heme-binding site is contributed by His-207. The Mg(2+) site is built by Glu-215 and Gln-218.

Belongs to the Cob(I)alamin adenosyltransferase family. PduO subfamily. In terms of assembly, the C-terminal domain (PduOC) forms stable octamers and also crystallizes as an octamer. Forms a complex with PduS. Heme b is required as a cofactor. Mg(2+) serves as cofactor.

The protein localises to the bacterial microcompartment. The catalysed reaction is cob(I)alamin-[corrinoid adenosyltransferase] + ATP = apo-[corrinoid adenosyltransferase] + adenosylcob(III)alamin + triphosphate. Its pathway is polyol metabolism; 1,2-propanediol degradation. It functions in the pathway cofactor biosynthesis; adenosylcobalamin biosynthesis. Its activity is regulated as follows. Inhibited by ADP but not significantly by other nucleotides, inhibited by diphosphate and less well by triphosphate. Converts cob(I)alamin to adenosylcobalamin (adenosylcob(III)alamin), the cofactor for propanediol dehydratase. Found in the bacterial microcompartment (BMC) dedicated to 1,2-propanediol (1,2-PD) degradation. For adenosylcobalamin synthesis dATP can replace ATP, but no other nucleotides will substitute. PduS and PduO allow regeneration of the adenosylcobalamin cofactor within the BMC. Functionally, the 1,2-PD-specific bacterial microcompartment (BMC) concentrates low levels of 1,2-PD catabolic enzymes, concentrates volatile reaction intermediates thus enhancing pathway flux and keeps the level of toxic, mutagenic propionaldehyde low. The polypeptide is Corrinoid adenosyltransferase PduO (Salmonella typhimurium (strain LT2 / SGSC1412 / ATCC 700720)).